The following is a 240-amino-acid chain: Ribose-5-phosphate isomerase (240 aa).

Substrate-binding positions include 34–37 (SGST), 88–91 (DGAD), and 101–104 (KGGG). Glu110 acts as the Proton acceptor in catalysis. Lys128 contacts substrate.

Belongs to the ribose 5-phosphate isomerase family.

The protein resides in the cytoplasm. The catalysed reaction is aldehydo-D-ribose 5-phosphate = D-ribulose 5-phosphate. It functions in the pathway carbohydrate degradation; pentose phosphate pathway; D-ribose 5-phosphate from D-ribulose 5-phosphate (non-oxidative stage): step 1/1. Involved in the first step of the non-oxidative branch of the pentose phosphate pathway. It catalyzes the reversible conversion of ribose-5-phosphate to ribulose 5-phosphate. This Candida albicans (strain SC5314 / ATCC MYA-2876) (Yeast) protein is Ribose-5-phosphate isomerase (RKI1).